The primary structure comprises 216 residues: Uracil phosphoribosyltransferase (216 aa).

5-phospho-alpha-D-ribose 1-diphosphate-binding positions include R85, R110, and 135-143 (DPMVATGYS). Residues I200 and 205–207 (GDA) each bind uracil. Residue D206 coordinates 5-phospho-alpha-D-ribose 1-diphosphate.

It belongs to the UPRTase family. Mg(2+) serves as cofactor.

It carries out the reaction UMP + diphosphate = 5-phospho-alpha-D-ribose 1-diphosphate + uracil. It participates in pyrimidine metabolism; UMP biosynthesis via salvage pathway; UMP from uracil: step 1/1. Its activity is regulated as follows. Allosterically activated by GTP. Catalyzes the conversion of uracil and 5-phospho-alpha-D-ribose 1-diphosphate (PRPP) to UMP and diphosphate. This Burkholderia mallei (strain NCTC 10247) protein is Uracil phosphoribosyltransferase.